The following is a 339-amino-acid chain: Glyceraldehyde-3-phosphate dehydrogenase (339 aa).

NAD(+)-binding positions include 12-13, aspartate 35, and lysine 84; that span reads RI. Residues 155–157, threonine 186, 215–216, and arginine 238 contribute to the D-glyceraldehyde 3-phosphate site; these read SCT and TG. The active-site Nucleophile is the cysteine 156. Asparagine 320 contributes to the NAD(+) binding site.

It belongs to the glyceraldehyde-3-phosphate dehydrogenase family. As to quaternary structure, homotetramer.

It localises to the cytoplasm. The enzyme catalyses D-glyceraldehyde 3-phosphate + phosphate + NAD(+) = (2R)-3-phospho-glyceroyl phosphate + NADH + H(+). It functions in the pathway carbohydrate degradation; glycolysis; pyruvate from D-glyceraldehyde 3-phosphate: step 1/5. This is Glyceraldehyde-3-phosphate dehydrogenase (GAPD) from Mastigamoeba balamuthi (Phreatamoeba balamuthi).